The sequence spans 379 residues: Succinate--CoA ligase [ADP-forming] subunit beta (379 aa).

Positions 9–237 (RDILARYGIP…SSDEPEAEQR (229 aa)) constitute an ATP-grasp domain. Residues Lys45, 52–54 (GRG), Ile94, and Glu99 contribute to the ATP site. Positions 192 and 206 each coordinate Mg(2+). Substrate is bound by residues Asn257 and 314–316 (GIT).

This sequence belongs to the succinate/malate CoA ligase beta subunit family. In terms of assembly, heterotetramer of two alpha and two beta subunits. Requires Mg(2+) as cofactor.

It carries out the reaction succinate + ATP + CoA = succinyl-CoA + ADP + phosphate. The catalysed reaction is GTP + succinate + CoA = succinyl-CoA + GDP + phosphate. Its pathway is carbohydrate metabolism; tricarboxylic acid cycle; succinate from succinyl-CoA (ligase route): step 1/1. In terms of biological role, succinyl-CoA synthetase functions in the citric acid cycle (TCA), coupling the hydrolysis of succinyl-CoA to the synthesis of either ATP or GTP and thus represents the only step of substrate-level phosphorylation in the TCA. The beta subunit provides nucleotide specificity of the enzyme and binds the substrate succinate, while the binding sites for coenzyme A and phosphate are found in the alpha subunit. The polypeptide is Succinate--CoA ligase [ADP-forming] subunit beta (Roseiflexus sp. (strain RS-1)).